A 72-amino-acid chain; its full sequence is Galensin (72 aa).

Residues 1 to 22 form the signal peptide; it reads MLTLKKSMLLLFFLGLVSVSLA. Residues 23 to 48 constitute a propeptide that is removed on maturation; the sequence is DDKREDEAEEGEDKRAAEEERNVEKR. F71 carries the post-translational modification Phenylalanine amide.

Belongs to the frog skin active peptide (FSAP) family. Brevinin subfamily. In terms of assembly, homodimer; disulfide-linked. Expressed by the skin glands.

It localises to the secreted. Functionally, antibacterial activity against the Gram-positive bacterium M.luteus and the Gram-negative bacterium E.coli. In Kassina senegalensis (Senegal running frog), this protein is Galensin.